Consider the following 344-residue polypeptide: Heat-inducible transcription repressor HrcA (344 aa).

This sequence belongs to the HrcA family.

In terms of biological role, negative regulator of class I heat shock genes (grpE-dnaK-dnaJ and groELS operons). Prevents heat-shock induction of these operons. The protein is Heat-inducible transcription repressor HrcA of Streptococcus pyogenes serotype M6 (strain ATCC BAA-946 / MGAS10394).